The sequence spans 116 residues: Ferredoxin-thioredoxin reductase, catalytic chain (116 aa).

Residue Cys-57 participates in [4Fe-4S] cluster binding. Cys-59 serves as the catalytic Nucleophile. Cys-59 and Cys-89 form a disulfide bridge. Residues Cys-76, Cys-78, and Cys-87 each contribute to the [4Fe-4S] cluster site.

This sequence belongs to the ferredoxin thioredoxin reductase beta subunit family. As to quaternary structure, heterodimer of subunit A (variable subunit) and subunit B (catalytic subunit). Heterodimeric FTR forms a complex with ferredoxin and thioredoxin. It depends on [4Fe-4S] cluster as a cofactor.

The protein resides in the plastid. It localises to the chloroplast. The enzyme catalyses [thioredoxin]-disulfide + 2 reduced [2Fe-2S]-[ferredoxin] + 2 H(+) = [thioredoxin]-dithiol + 2 oxidized [2Fe-2S]-[ferredoxin]. Its function is as follows. Catalytic subunit of the ferredoxin-thioredoxin reductase (FTR), which catalyzes the two-electron reduction of thioredoxins by the electrons provided by reduced ferredoxin. In Pyropia yezoensis (Susabi-nori), this protein is Ferredoxin-thioredoxin reductase, catalytic chain (ftrB).